Consider the following 538-residue polypeptide: Chaperonin GroEL (538 aa).

Residues 29 to 32 (TIGP), 86 to 90 (DGTTT), glycine 413, 476 to 478 (NAA), and aspartate 492 each bind ATP.

The protein belongs to the chaperonin (HSP60) family. As to quaternary structure, forms a cylinder of 14 subunits composed of two heptameric rings stacked back-to-back. Interacts with the co-chaperonin GroES.

The protein resides in the cytoplasm. It catalyses the reaction ATP + H2O + a folded polypeptide = ADP + phosphate + an unfolded polypeptide.. In terms of biological role, together with its co-chaperonin GroES, plays an essential role in assisting protein folding. The GroEL-GroES system forms a nano-cage that allows encapsulation of the non-native substrate proteins and provides a physical environment optimized to promote and accelerate protein folding. This is Chaperonin GroEL from Staphylococcus aureus (strain Mu3 / ATCC 700698).